The sequence spans 179 residues: UPF0398 protein Bsph_0756 (179 aa).

The protein belongs to the UPF0398 family.

In Lysinibacillus sphaericus (strain C3-41), this protein is UPF0398 protein Bsph_0756.